Reading from the N-terminus, the 379-residue chain is Putative acetyl-CoA C-acetyltransferase VraB (379 aa).

The Acyl-thioester intermediate role is filled by C86. The Proton acceptor role is filled by H338.

Belongs to the thiolase-like superfamily. Thiolase family.

This chain is Putative acetyl-CoA C-acetyltransferase VraB (vraB), found in Staphylococcus aureus (strain COL).